The sequence spans 338 residues: MEYFMVPTQKVPSLQHFRKTEKEVIGGLCSLANIPLTPETQRDQERRIRREIANSNERRRMQSINAGFQSLKTLIPHTDGEKLSKAAILQQTAEYIFSLEQEKTRLLQQNTQLKRFIQELSGSSPKRRRAEDKDEGIGSPDIWEDEKAEDLRREMIELRQQLDKERSVRMMLEEQVRSLEAHMYPEKLKVIAQQVQLQQQQEQVRLLHQEKLEREQQQLRTQLLPPPAPTHHPTVIVPAPPPPPSHHINVVTMGPSSVINSVSTSRQNLDTIVQAIQHIEGTQEKQELEEEQRRAVIVKPVRSCPEAPTSDTASDSEASDSDAMDQSREEPSGDGELP.

A bHLH domain is found at I48–L99. Residues E100–L120 are leucine-zipper 1. Residues Q118–D141 are disordered. 3 positions are modified to phosphoserine: S123, S124, and S139. A Glycyl lysine isopeptide (Lys-Gly) (interchain with G-Cter in SUMO2) cross-link involves residue K147. Positions L151–L179 are leucine-zipper 2. Glycyl lysine isopeptide (Lys-Gly) (interchain with G-Cter in SUMO2) cross-links involve residues K187, K189, and K285. Over residues Q283–R294 the composition is skewed to basic and acidic residues. The interval Q283–P338 is disordered.

As to quaternary structure, efficient DNA binding requires dimerization with another bHLH protein. Homodimer.

Its subcellular location is the nucleus. In terms of biological role, transcription factor that activates both viral and cellular genes by binding to the symmetrical DNA sequence 5'-CAGCTG-3'. This is Transcription factor AP-4 (TFAP4) from Homo sapiens (Human).